A 1229-amino-acid chain; its full sequence is Membrane-anchored lipid-binding protein SIP3 (1229 aa).

Residues 1–1066 (MSVHGRDPKK…AEKFSRINRM (1066 aa)) are Cytoplasmic-facing. The PH domain occupies 309 to 423 (SPEKSGWLYM…WLIAFEATKK (115 aa)). Positions 771–976 (EYSITYNHEY…VLRYYLEKIG (206 aa)) constitute a VASt domain. Residues 1067–1087 (MVVGLLASIMINILLSEKASV) form a helical membrane-spanning segment. Over 1088–1229 (PYWSIKRAEK…ELEKLRPPIT (142 aa)) the chain is Lumenal. An N-linked (GlcNAc...) asparagine glycan is attached at N1206.

This sequence belongs to the SIP3 family. As to quaternary structure, interacts with SNF1.

The protein localises to the endoplasmic reticulum membrane. Functionally, may be involved in sterol transfer between intracellular membranes. The polypeptide is Membrane-anchored lipid-binding protein SIP3 (Saccharomyces cerevisiae (strain ATCC 204508 / S288c) (Baker's yeast)).